The following is a 215-amino-acid chain: RNA pyrophosphohydrolase (215 aa).

The Nudix hydrolase domain maps to 6–149 (GFRPNVGIIL…KRDVYQLALT (144 aa)). The Nudix box motif lies at 38–59 (GGIKYGETPMQAMYRELHEETG).

This sequence belongs to the Nudix hydrolase family. RppH subfamily. The cofactor is a divalent metal cation.

In terms of biological role, accelerates the degradation of transcripts by removing pyrophosphate from the 5'-end of triphosphorylated RNA, leading to a more labile monophosphorylated state that can stimulate subsequent ribonuclease cleavage. The protein is RNA pyrophosphohydrolase of Burkholderia lata (strain ATCC 17760 / DSM 23089 / LMG 22485 / NCIMB 9086 / R18194 / 383).